The chain runs to 320 residues: Cytochrome f (320 aa).

An N-terminal signal peptide occupies residues Met-1–Ala-35. Heme-binding residues include Tyr-36, Cys-56, Cys-59, and His-60. Residues Val-286–Lys-306 traverse the membrane as a helical segment.

It belongs to the cytochrome f family. As to quaternary structure, the 4 large subunits of the cytochrome b6-f complex are cytochrome b6, subunit IV (17 kDa polypeptide, petD), cytochrome f and the Rieske protein, while the 4 small subunits are PetG, PetL, PetM and PetN. The complex functions as a dimer. Requires heme as cofactor.

It is found in the plastid. The protein resides in the chloroplast thylakoid membrane. In terms of biological role, component of the cytochrome b6-f complex, which mediates electron transfer between photosystem II (PSII) and photosystem I (PSI), cyclic electron flow around PSI, and state transitions. In Cycas taitungensis (Prince sago), this protein is Cytochrome f.